A 610-amino-acid polypeptide reads, in one-letter code: Elongation factor 4 (610 aa).

The 185-residue stretch at 14–198 (ANIRNFSIVA…AIVTRLPPPQ (185 aa)) folds into the tr-type G domain. GTP is bound by residues 26–31 (DHGKST) and 145–148 (NKVD).

Belongs to the TRAFAC class translation factor GTPase superfamily. Classic translation factor GTPase family. LepA subfamily.

The protein localises to the cell inner membrane. It catalyses the reaction GTP + H2O = GDP + phosphate + H(+). Its function is as follows. Required for accurate and efficient protein synthesis under certain stress conditions. May act as a fidelity factor of the translation reaction, by catalyzing a one-codon backward translocation of tRNAs on improperly translocated ribosomes. Back-translocation proceeds from a post-translocation (POST) complex to a pre-translocation (PRE) complex, thus giving elongation factor G a second chance to translocate the tRNAs correctly. Binds to ribosomes in a GTP-dependent manner. This is Elongation factor 4 from Nitrobacter hamburgensis (strain DSM 10229 / NCIMB 13809 / X14).